The sequence spans 193 residues: dCTP deaminase (193 aa).

DCTP contacts are provided by residues 110-115 (RSSLAR), Asp128, 136-138 (VLE), Tyr171, Lys178, and Gln182. The Proton donor/acceptor role is filled by Glu138. Residues 169–193 (RPYNRRQDAKYRDQQGAVASRIDKD) form a disordered region.

It belongs to the dCTP deaminase family. As to quaternary structure, homotrimer.

It carries out the reaction dCTP + H2O + H(+) = dUTP + NH4(+). It participates in pyrimidine metabolism; dUMP biosynthesis; dUMP from dCTP (dUTP route): step 1/2. Catalyzes the deamination of dCTP to dUTP. The sequence is that of dCTP deaminase from Cronobacter sakazakii (strain ATCC BAA-894) (Enterobacter sakazakii).